The sequence spans 139 residues: Myosin light chain kinase, smooth muscle (139 aa).

Positions 48–97 are disordered; the sequence is APTGENAKAPEMKARRPKSSLPPVLGTESDATVKKKPAPKTPPKAAMPPQ.

It belongs to the protein kinase superfamily. CAMK Ser/Thr protein kinase family. As to quaternary structure, interacts with SVIL. Post-translationally, the C-terminus is deglutamylated by AGTPBP1/CCP1, AGBL1/CCP4 and AGBL4/CCP6, leading to the formation of Myosin light chain kinase, smooth muscle, deglutamylated form. The consequences of C-terminal deglutamylation are unknown.

The catalysed reaction is L-seryl-[myosin light chain] + ATP = O-phospho-L-seryl-[myosin light chain] + ADP + H(+). It catalyses the reaction L-threonyl-[myosin light chain] + ATP = O-phospho-L-threonyl-[myosin light chain] + ADP + H(+). In terms of biological role, phosphorylates a specific serine in the N-terminus of a myosin light chain. Also regulates actin-myosin interaction through a non-kinase activity. The sequence is that of Myosin light chain kinase, smooth muscle (MYLK) from Sus scrofa (Pig).